A 234-amino-acid polypeptide reads, in one-letter code: Fibroblast growth factor-binding protein 1 (234 aa).

Positions 1-23 are cleaved as a signal peptide; it reads MRTHGLTLLSLLLLAVPMLLVEA. The segment at 25–59 is disordered; sequence KEGRNRRGSKASADESLALGKPGKEPRSQPTNYPI. 3 disulfide bridges follow: cysteine 71-cysteine 88, cysteine 97-cysteine 130, and cysteine 106-cysteine 142. Residue asparagine 155 is glycosylated (N-linked (GlcNAc...) asparagine). A disordered region spans residues 169 to 200; it reads MEPSPMDTVEVTTSSSPEKTQTMATKDPQCEE. O-linked (GalNAc...) serine glycosylation is present at serine 172. Polar residues predominate over residues 178–192; it reads EVTTSSSPEKTQTMA. Residues 194–234 form a sufficient for interaction with FGF2 and FGF2-induced effects region; it reads KDPQCEEEDLKNQRKAALEYCGETWGSLCNFFLSMVQGSSC. Cystine bridges form between cysteine 198-cysteine 234 and cysteine 214-cysteine 222.

The protein belongs to the fibroblast growth factor-binding protein family. As to quaternary structure, found in a complex with FGFBP1, FGF1 and FGF2. Interacts with FGF1, FGF7, FGF10, FGF22 and HSPG2. Interacts with FGF2.

Its subcellular location is the secreted. The protein localises to the extracellular space. It localises to the cell membrane. Its function is as follows. Acts as a carrier protein that release fibroblast-binding factors (FGFs) from the extracellular matrix (EM) storage and thus enhance the mitogenic activity of FGFs. Enhances FGF2 signaling during tissue repair, angiogenesis and in tumor growth. The polypeptide is Fibroblast growth factor-binding protein 1 (FGFBP1) (Bos taurus (Bovine)).